Reading from the N-terminus, the 247-residue chain is Uridylate kinase (247 aa).

Residue 15–18 participates in ATP binding; that stretch reads KLSG. An involved in allosteric activation by GTP region spans residues 23–28; it reads GEEGFG. G57 is a UMP binding site. The ATP site is built by G58 and R62. UMP contacts are provided by residues D77 and 138-145; that span reads TGNPFFTT. ATP is bound by residues T165, Y171, and D174.

It belongs to the UMP kinase family. As to quaternary structure, homohexamer.

The protein localises to the cytoplasm. It carries out the reaction UMP + ATP = UDP + ADP. Its pathway is pyrimidine metabolism; CTP biosynthesis via de novo pathway; UDP from UMP (UMPK route): step 1/1. Its activity is regulated as follows. Allosterically activated by GTP. Inhibited by UTP. In terms of biological role, catalyzes the reversible phosphorylation of UMP to UDP. The protein is Uridylate kinase of Pseudoalteromonas atlantica (strain T6c / ATCC BAA-1087).